Reading from the N-terminus, the 118-residue chain is uncharacterized protein (118 aa).

The chain crosses the membrane as a helical span at residues Leu7–Pro27. Residues Lys31–Asn118 are a coiled coil.

The protein localises to the cell membrane. This is an uncharacterized protein from Bacillus subtilis (strain 168).